Reading from the N-terminus, the 118-residue chain is Large ribosomal subunit protein uL24c (118 aa).

It belongs to the universal ribosomal protein uL24 family. Part of the 50S ribosomal subunit.

The protein resides in the plastid. It is found in the organellar chromatophore. Functionally, one of two assembly initiator proteins, it binds directly to the 5'-end of the 23S rRNA, where it nucleates assembly of the 50S subunit. In Paulinella chromatophora, this protein is Large ribosomal subunit protein uL24c (rpl24).